Here is a 243-residue protein sequence, read N- to C-terminus: MLTFLIPTAKEMTTPKESHPHLLPQDSQAILKIMTAMTTEDLAKSYRIKEEAAKKEQQRWQDMASQQSLAYPAYQLFNGLMYRHIKRDKLTTQEQAYLTQQVYITSSFYGIIPANHPIAEHRHDFHTRIKIEGQSLKSYWRPCYNQFAKEHPQVISLLSSEFDDVFSKDCKQLWISPKFMAEKEGQFKTHSTISKKARGAFLTACMENNCQTVDSLKSLVFAGFYYHPDLSTDHEFVYIKKEA.

The protein belongs to the UPF0246 family.

The protein is UPF0246 protein spyM18_2163 of Streptococcus pyogenes serotype M18 (strain MGAS8232).